The chain runs to 226 residues: PKHD-type hydroxylase Sde_2812 (226 aa).

The Fe2OG dioxygenase domain maps to 78–178 (KIFPPLFNCY…RLASFFWLQS (101 aa)). The Fe cation site is built by His-96, Asp-98, and His-159. Position 169 (Arg-169) interacts with 2-oxoglutarate.

Requires Fe(2+) as cofactor. It depends on L-ascorbate as a cofactor.

This Saccharophagus degradans (strain 2-40 / ATCC 43961 / DSM 17024) protein is PKHD-type hydroxylase Sde_2812.